The chain runs to 232 residues: Transcriptional regulatory protein CpxR (232 aa).

One can recognise a Response regulatory domain in the interval 3–115 (KILLVDDDRE…ELVARIRAIL (113 aa)). Position 51 is a 4-aspartylphosphate (aspartate 51). The ompR/PhoB-type DNA-binding region spans 131–230 (SPTLEVDALS…LRGRGYLMVS (100 aa)).

As to quaternary structure, interacts with cognate sensor kinase CpxA. Phosphorylated by CpxA.

It localises to the cytoplasm. The two-component system is activated by envelope stress such as overexpression of some (misfolded) periplasmic proteins. In terms of biological role, response regulator member of the two-component regulatory system CpxA/CpxR which responds to envelope stress response by activating or, in some cases, repressing expression of downstream genes. Binds to the promoter regions of various genes in vitro, including ompC, cpxP, ryhB and mrkA and, when CpxR is phosphorylated, pecO. Represses expression of the major pilin of type 3 fimbriae MrkA as well as that of type 1 fimbriae FimA. Repression of expression of MrkA appears to be indirect, mediated by activation of the iron homeostasis regulator RyhB. The sequence is that of Transcriptional regulatory protein CpxR from Klebsiella pneumoniae subsp. pneumoniae (strain HS11286).